A 121-amino-acid polypeptide reads, in one-letter code: Large ribosomal subunit protein bL12 (121 aa).

It belongs to the bacterial ribosomal protein bL12 family. Homodimer. Part of the ribosomal stalk of the 50S ribosomal subunit. Forms a multimeric L10(L12)X complex, where L10 forms an elongated spine to which 2 to 4 L12 dimers bind in a sequential fashion. Binds GTP-bound translation factors.

Functionally, forms part of the ribosomal stalk which helps the ribosome interact with GTP-bound translation factors. Is thus essential for accurate translation. In Malacoplasma penetrans (strain HF-2) (Mycoplasma penetrans), this protein is Large ribosomal subunit protein bL12.